Reading from the N-terminus, the 480-residue chain is Uronate isomerase (480 aa).

This sequence belongs to the metallo-dependent hydrolases superfamily. Uronate isomerase family.

It catalyses the reaction D-glucuronate = D-fructuronate. The enzyme catalyses aldehydo-D-galacturonate = keto-D-tagaturonate. The protein operates within carbohydrate metabolism; pentose and glucuronate interconversion. This is Uronate isomerase from Phenylobacterium zucineum (strain HLK1).